The primary structure comprises 617 residues: Alkaline/neutral invertase E, chloroplastic (617 aa).

The transit peptide at 1–45 directs the protein to the chloroplast; that stretch reads MAASETVLRVPLGSVSQSCYLASFFVNSTPNLSFKPVSRNRKTVR. At serine 87 the chain carries Phosphoserine.

It belongs to the glycosyl hydrolase 100 family. As to expression, expressed in roots, leaves and flowers.

It localises to the plastid. The protein resides in the chloroplast. It catalyses the reaction Hydrolysis of terminal non-reducing beta-D-fructofuranoside residues in beta-D-fructofuranosides.. Its function is as follows. Chloroplastic invertase that cleaves sucrose into glucose and fructose and is associated with the development of the photosynthetic apparatus and the assimilation of nitrogen in seedlings to control the sucrose to hexose ratio. Participates in the carbon flux between the cytosol and plastids in leaves. This chain is Alkaline/neutral invertase E, chloroplastic, found in Arabidopsis thaliana (Mouse-ear cress).